The chain runs to 299 residues: Probable lipid kinase YegS (299 aa).

The 132-residue stretch at 2 to 133 (ANFPDSLLIL…IDMARVNDKT (132 aa)) folds into the DAGKc domain. ATP is bound by residues Thr40, 66–72 (GDGTINE), and Thr95. Mg(2+)-binding residues include Leu215, Asp218, and Leu220. The active-site Proton acceptor is the Glu271.

It belongs to the diacylglycerol/lipid kinase family. YegS lipid kinase subfamily. Requires Mg(2+) as cofactor. Ca(2+) serves as cofactor.

It is found in the cytoplasm. Functionally, probably phosphorylates lipids; the in vivo substrate is unknown. The protein is Probable lipid kinase YegS of Salmonella arizonae (strain ATCC BAA-731 / CDC346-86 / RSK2980).